A 383-amino-acid polypeptide reads, in one-letter code: Protein delta homolog 1 (383 aa).

The first 23 residues, 1–23 (MTATEALLRVLLLLLAFGHSTYG), serve as a signal peptide directing secretion. EGF-like domains follow at residues 24-55 (AECFPACNPQNGFCEDDNVCRCQPGWQGPLCD), 53-86 (LCDQCVTSPGCLHGLCGEPGQCICTDGWDGELCD), 88-125 (DVRACSSAPCANNRTCVSLDDGLYECSCAPGYSGKDCQ), 127-168 (KDGP…NFCE), 170-206 (VANSCTPNPCENDGVCTDIGGDFRCRCPAGFIDKTCS), and 208-245 (PVTNCASSPCQNGGTCLQHTQVSYECLCKPEFTGLTCV). The Extracellular portion of the chain corresponds to 24–303 (AECFPACNPQ…KKTPLLTEGQ (280 aa)). 12 disulfide bridges follow: C26/C37, C30/C43, C45/C54, C57/C68, C63/C74, C76/C85, C92/C103, C97/C113, C115/C124, C131/C144, C138/C156, and C158/C167. S94 carries O-linked (GalNAc...) serine glycosylation. A glycan (N-linked (GlcNAc...) asparagine) is linked at N100. A glycan (O-linked (GalNAc...) threonine) is linked at T143. O-linked (GalNAc...) serine; partial glycosylation occurs at S163. N-linked (GlcNAc...) asparagine; atypical; partial glycosylation is found at N165 and N172. 6 cysteine pairs are disulfide-bonded: C174–C185, C179–C194, C196–C205, C212–C223, C217–C233, and C235–C244. O-linked (GalNAc...) serine glycosylation occurs at S214. A glycan (O-linked (GalNAc...) threonine; partial) is linked at T222. S251 is a glycosylation site (O-linked (GalNAc...) serine; partial). Residue T256 is glycosylated (O-linked (GalNAc...) threonine). S260 is a glycosylation site (O-linked (GalNAc...) serine; partial). The helical transmembrane segment at 304–327 (AICFTILGVLTSLVVLGTVGIVFL) threads the bilayer. Topologically, residues 328–383 (NKCETWVSNLRYNHMLRKKKNLLLQYNSGEDLAVNIIFPEKIDMTTFSKEAGDEEI) are cytoplasmic.

Monomer. Interacts with SH3RF2. Post-translationally, N- and O-glycosylated. O-glycosylated with core 1 or possibly core 8 glycans. As to expression, found within the stromal cells in close contact to the vascular structure of placental villi, yolk sac, fetal liver, adrenal cortex and pancreas and in the beta cells of the islets of Langerhans in the adult pancreas. Found also in some forms of neuroendocrine lung tumor tissue.

The protein resides in the membrane. The protein localises to the cytoplasm. May have a role in neuroendocrine differentiation. The sequence is that of Protein delta homolog 1 (DLK1) from Homo sapiens (Human).